Consider the following 1064-residue polypeptide: Serine/threonine protein kinase KIN1 (1064 aa).

The interval 1-113 is disordered; sequence MDDYHVNTAF…SSQGMPKQFH (113 aa). Over residues 8-36 the composition is skewed to polar residues; it reads TAFSMGRGNQQDDGNSESNSMHTQPSTMA. Residues 74–91 show a composition bias toward basic and acidic residues; the sequence is AEQKERQVELEGKSRENA. Residues 93-108 show a composition bias toward polar residues; the sequence is KPNTTSQSRVSSSQGM. The region spanning 120 to 398 is the Protein kinase domain; it reads WEFVETVGAG…LKQVVEHHWM (279 aa). Residues 126–134 and Lys-149 contribute to the ATP site; that span reads VGAGSMGKV. The active-site Proton acceptor is the Asp-269. Position 534 is a phosphoserine (Ser-534). The segment at 549 to 621 is disordered; the sequence is SEPEATLATK…SPTPQGNDYQ (73 aa). Polar residues predominate over residues 557-571; that stretch reads TKDTSVPFTPKNSDG. Position 593 is a phosphoserine (Ser-593). Residues 598-608 are compositionally biased toward basic and acidic residues; that stretch reads KSSDNQRREME. Ser-646 carries the post-translational modification Phosphoserine. Disordered regions lie at residues 652–672, 694–714, 762–797, 823–843, and 958–1016; these read TIEQ…QKTH, MNEP…FPAL, EGSD…HARR, LESS…QTND, and HESI…GMTT. Residues 654–670 show a composition bias toward polar residues; the sequence is EQTSVNSNNSINKPVQK. At Ser-764 the chain carries Phosphoserine. Residues 779–794 are compositionally biased toward basic residues; sequence KGRKLHPSARAKSVGH. Composition is skewed to polar residues over residues 832–843, 963–989, and 998–1016; these read DSLGNVTSQTND, RQGS…SITE, and GTSL…GMTT. Ser-986 is modified (phosphoserine). Residues 1015 to 1064 form the KA1 domain; sequence TTTEKEPIKFEIHIVKVRIVGLAGVHFKKISGNTWLYKELASSILKELKL.

Belongs to the protein kinase superfamily. CAMK Ser/Thr protein kinase family. NIM1 subfamily. As to quaternary structure, interacts with SEC9 and SRO7. Autophosphorylated.

It is found in the cytoplasm. The protein localises to the cell membrane. The enzyme catalyses L-seryl-[protein] + ATP = O-phospho-L-seryl-[protein] + ADP + H(+). It catalyses the reaction L-threonyl-[protein] + ATP = O-phospho-L-threonyl-[protein] + ADP + H(+). In terms of biological role, serine/threonine protein kinase involved in the regulation of exocytosis. Induces phosphorylation of SEC9 and its release from the plasma membrane to the cytosol. This is Serine/threonine protein kinase KIN1 (KIN1) from Saccharomyces cerevisiae (strain ATCC 204508 / S288c) (Baker's yeast).